We begin with the raw amino-acid sequence, 541 residues long: Transmembrane protein 151 homolog (541 aa).

Transmembrane regions (helical) follow at residues 27–47 (GYGKCLVCSLLLILCFFYATF), 73–93 (YNFVPIVFGLMLYIVYLMECW), and 254–274 (PWFLHPIVFWFFSIFVLSWPL). The disordered stretch occupies residues 503-541 (ASISHSSSKDLKSLTLKSSSSNNNNNNSNNNNNDDPEHP). Low complexity predominate over residues 515–535 (SLTLKSSSSNNNNNNSNNNNN).

Belongs to the TMEM151 family.

It is found in the membrane. The polypeptide is Transmembrane protein 151 homolog (Caenorhabditis elegans).